The primary structure comprises 120 residues: Large ribosomal subunit protein bL20 (120 aa).

This sequence belongs to the bacterial ribosomal protein bL20 family.

Binds directly to 23S ribosomal RNA and is necessary for the in vitro assembly process of the 50S ribosomal subunit. It is not involved in the protein synthesizing functions of that subunit. This Ureaplasma urealyticum serovar 10 (strain ATCC 33699 / Western) protein is Large ribosomal subunit protein bL20.